Consider the following 869-residue polypeptide: Structure-specific endonuclease subunit SLX4 (869 aa).

The span at Ser-40–Ser-59 shows a compositional bias: low complexity. Disordered regions lie at residues Ser-40–Asp-79, Asn-92–Gly-116, Lys-165–Leu-199, Gly-293–Lys-323, Thr-351–Glu-388, Ala-418–Asn-437, and Lys-630–Thr-774. Positions Ala-63–Asp-79 are enriched in basic and acidic residues. Polar residues-rich tracts occupy residues Lys-165–Pro-174 and Leu-294–Ser-311. Basic residues predominate over residues Lys-312–Pro-322. Composition is skewed to polar residues over residues Val-647–Gly-657 and Ser-664–Val-673. Residues Val-688 to Lys-700 are compositionally biased toward low complexity. The span at Ile-765–Thr-774 shows a compositional bias: polar residues.

It belongs to the SLX4 family. Forms a heterodimer with SLX1. In terms of processing, phosphorylated in response to DNA damage.

It is found in the nucleus. Its function is as follows. Regulatory subunit of the SLX1-SLX4 structure-specific endonuclease that resolves DNA secondary structures generated during DNA repair and recombination. Has endonuclease activity towards branched DNA substrates, introducing single-strand cuts in duplex DNA close to junctions with ss-DNA. This is Structure-specific endonuclease subunit SLX4 from Paracoccidioides brasiliensis (strain Pb18).